Consider the following 287-residue polypeptide: MDFVLNTIQWLREVPRNFKGEVATVVFDDSADILVYCCVLYILLVFMVPEHIMKNREPFNLRLPFVVWNIGLCLFSICGAYSCVKNMTALYWERGFYRTTCFFDSSVAYDGEFAFWVFYFILSKIPEMIDTVFLVFQKKPVIFLHWYHHLTVAIFCWHAGHALIPSGLWFATMNYCVHSIMYFYYFMCACGMRKVIRPIAPFITMMQLLQMVAGTLIVLYTAYHSYLSESGCEVDRTSIRLGLVMYGSYFFLFAVLFGKLYLKKQVKPSGTASAYAMSKKRNGEKMA.

Transmembrane regions (helical) follow at residues 33–53 (ILVY…EHIM), 64–84 (PFVV…YSCV), and 115–135 (FWVF…VFLV). A HxxHH motif motif is present at residues 145–149 (HWYHH). H148 (nucleophile) is an active-site residue. Helical transmembrane passes span 150 to 170 (LTVA…GLWF), 172 to 192 (TMNY…ACGM), 199 to 219 (IAPF…LIVL), and 241 to 261 (LGLV…GKLY).

Belongs to the ELO family.

It is found in the membrane. It carries out the reaction a very-long-chain acyl-CoA + malonyl-CoA + H(+) = a very-long-chain 3-oxoacyl-CoA + CO2 + CoA. Its function is as follows. Involved in the synthesis of fatty acids. Elongates C16:0 and C18:0 fatty acids to C26:0, with C24:0 being the main product. The chain is Very long chain fatty acid elongase 4 from Trypanosoma cruzi (strain CL Brener).